The chain runs to 541 residues: Protein wntless homolog (541 aa).

Residues 1-15 are Cytoplasmic-facing; that stretch reads MAGAIIENMSTKKLC. A helical membrane pass occupies residues 16 to 36; the sequence is IVGGILLVFQIVAFLVGGLIA. The Lumenal portion of the chain corresponds to 37-232; that stretch reads PAPTTAVPYT…GIHQNGGFTK (196 aa). An interaction with Wnt proteins region spans residues 101–232; it reads MEMSPWFQFM…GIHQNGGFTK (132 aa). The helical transmembrane segment at 233-253 threads the bilayer; it reads VWFAMKTFLTPSIFIIMVWYW. Residues 254 to 268 are Cytoplasmic-facing; it reads RRITMMSRPPVLLEK. The chain crosses the membrane as a helical span at residues 269–289; sequence VIFALGISMTFINIPVEWFSI. Over 290 to 303 the chain is Lumenal; the sequence is GFDWTWMLLFGDIR. A helical transmembrane segment spans residues 304–324; sequence QGIFYAMLLSFWIIFCGEHMM. Residues 325–331 lie on the Cytoplasmic side of the membrane; the sequence is DQHERNH. A helical transmembrane segment spans residues 332 to 352; sequence IAGYWKQVGPIAVGSFCLFIF. The Lumenal portion of the chain corresponds to 353-380; sequence DMCERGVQLTNPFYSIWTTDVGTELAMA. Residues 381–401 form a helical membrane-spanning segment; sequence FIIVAGICLCLYFLFLCFMVF. The Cytoplasmic segment spans residues 402–431; sequence QVFRNISGKQSSLPAMSKVRRLHYEGLIFR. The helical transmembrane segment at 432–452 threads the bilayer; it reads FKFLMLITLACAAMTVIFFIV. The Lumenal portion of the chain corresponds to 453–471; it reads SQVSEGHWKWGGVTVQVSS. A helical transmembrane segment spans residues 472-492; sequence AFFTGIYGMWNLYVFALMFLY. At 493–541 the chain is on the cytoplasmic side; the sequence is APSHKNYGEDQSNGDLGVHSGEELQLTTTITHVDGPTEIYKLTRKEAQE.

Belongs to the wntless family. As to quaternary structure, interacts with WNT3A. Interacts with WNT1, WNT3 and WNT5. Post-translationally, N-glycosylated. Expressed in the brain, skeletal muscle, heart muscle, lung, gut, liver, and kidney (at protein level). In the brain, expressed in the cortex, striatum, hippocampus and to a lesser extent in the cerebellum (at protein level). Expressed in kidney, lung, skin, intestine, brain, spinal cord, skeleton, eyes, excretion glands, tooth and palatal shelves. In the cerebellum, expressed in Purkinje cells.

The protein resides in the golgi apparatus membrane. It is found in the cytoplasmic vesicle membrane. It localises to the cell membrane. Its subcellular location is the endoplasmic reticulum membrane. The protein localises to the early endosome membrane. Functionally, regulates Wnt proteins sorting and secretion in a feedback regulatory mechanism. This reciprocal interaction plays a key role in the regulation of expression, subcellular location, binding and organelle-specific association of Wnt proteins. Also plays an important role in establishment of the anterior-posterior body axis formation during development. The sequence is that of Protein wntless homolog (Wls) from Mus musculus (Mouse).